The following is a 156-amino-acid chain: Small ribosomal subunit protein uS7 (156 aa).

Belongs to the universal ribosomal protein uS7 family. As to quaternary structure, part of the 30S ribosomal subunit. Contacts proteins S9 and S11.

One of the primary rRNA binding proteins, it binds directly to 16S rRNA where it nucleates assembly of the head domain of the 30S subunit. Is located at the subunit interface close to the decoding center, probably blocks exit of the E-site tRNA. The sequence is that of Small ribosomal subunit protein uS7 from Vibrio campbellii (strain ATCC BAA-1116).